The primary structure comprises 202 residues: Adenylyl-sulfate kinase (202 aa).

Residue 35–42 (GLSGSGKS) coordinates ATP. The Phosphoserine intermediate role is filled by S109.

The protein belongs to the APS kinase family.

The enzyme catalyses adenosine 5'-phosphosulfate + ATP = 3'-phosphoadenylyl sulfate + ADP + H(+). It functions in the pathway sulfur metabolism; hydrogen sulfide biosynthesis; sulfite from sulfate: step 2/3. Catalyzes the synthesis of activated sulfate. In Bacteroides fragilis (strain ATCC 25285 / DSM 2151 / CCUG 4856 / JCM 11019 / LMG 10263 / NCTC 9343 / Onslow / VPI 2553 / EN-2), this protein is Adenylyl-sulfate kinase.